The following is a 311-amino-acid chain: Probable protein phosphatase 2C 59 (311 aa).

Low complexity predominate over residues 1–14 (MGYLNSVLSSSSQV). The interval 1-26 (MGYLNSVLSSSSQVHSDDGPVSGGGL) is disordered. Positions 33 to 279 (SYGYASSPGK…DNITCVVVRF (247 aa)) constitute a PPM-type phosphatase domain. 4 residues coordinate Mn(2+): aspartate 69, glycine 70, aspartate 231, and aspartate 270.

The protein belongs to the PP2C family. In terms of assembly, interacts with the Pseudomonas syringae pv. maculicola effector HopW1-1 (via C-terminus). Requires Mg(2+) as cofactor. Mn(2+) is required as a cofactor.

It catalyses the reaction O-phospho-L-seryl-[protein] + H2O = L-seryl-[protein] + phosphate. It carries out the reaction O-phospho-L-threonyl-[protein] + H2O = L-threonyl-[protein] + phosphate. Inhibited by sodium fluoride (NaF). In terms of biological role, protein phosphatase that modulates defense response to pathogenic bacteria, conferring resistance and promoting salicylic acid (SA) accumulation. The sequence is that of Probable protein phosphatase 2C 59 (WIN2) from Arabidopsis thaliana (Mouse-ear cress).